Here is a 383-residue protein sequence, read N- to C-terminus: BRISC and BRCA1-A complex member 2 (383 aa).

An N-acetylmethionine modification is found at Met1. A Phosphoserine modification is found at Ser2. UEV-like stretches follow at residues 30-147 (DATN…TLLE) and 275-364 (IAAF…RAKA).

The protein belongs to the BABAM2 family. As to quaternary structure, component of the ARISC complex, at least composed of UIMC1/RAP80, ABRAXAS1, BRCC3/BRCC36, BABAM2 and BABAM1/NBA1. Component of the BRCA1-A complex, at least composed of BRCA1, BARD1, UIMC1/RAP80, ABRAXAS1, BRCC3/BRCC36, BABAM2 and BABAM1/NBA1. In the BRCA1-A complex, interacts directly with ABRAXAS1, BRCC3/BRCC36 and BABAM1/NBA1. Binds polyubiquitin. Component of the BRISC complex, at least composed of ABRAXAS2, BRCC3/BRCC36, BABAM2 and BABAM1/NBA1. Identified in a complex with SHMT2 and the other subunits of the BRISC complex. Component of the BRCA1/BRCA2 containing complex (BRCC), which also contains BRCA1, BRCA2, BARD1, BRCC3/BRCC36 and RAD51. BRCC is a ubiquitin E3 ligase complex that enhances cellular survival following DNA damage. May interact with FAS and TNFRSF1A. As to expression, expressed in all cell lines examined. Highly expressed in placenta.

The protein localises to the cytoplasm. The protein resides in the nucleus. Functionally, component of the BRCA1-A complex, a complex that specifically recognizes 'Lys-63'-linked ubiquitinated histones H2A and H2AX at DNA lesions sites, leading to target the BRCA1-BARD1 heterodimer to sites of DNA damage at double-strand breaks (DSBs). The BRCA1-A complex also possesses deubiquitinase activity that specifically removes 'Lys-63'-linked ubiquitin on histones H2A and H2AX. In the BRCA1-A complex, it acts as an adapter that bridges the interaction between BABAM1/NBA1 and the rest of the complex, thereby being required for the complex integrity and modulating the E3 ubiquitin ligase activity of the BRCA1-BARD1 heterodimer. Component of the BRISC complex, a multiprotein complex that specifically cleaves 'Lys-63'-linked ubiquitin in various substrates. Within the BRISC complex, acts as an adapter that bridges the interaction between BABAM1/NBA1 and the rest of the complex, thereby being required for the complex integrity. The BRISC complex is required for normal mitotic spindle assembly and microtubule attachment to kinetochores via its role in deubiquitinating NUMA1. The BRISC complex plays a role in interferon signaling via its role in the deubiquitination of the interferon receptor IFNAR1; deubiquitination increases IFNAR1 activity by enhancing its stability and cell surface expression. Down-regulates the response to bacterial lipopolysaccharide (LPS) via its role in IFNAR1 deubiquitination. May play a role in homeostasis or cellular differentiation in cells of neural, epithelial and germline origins. May also act as a death receptor-associated anti-apoptotic protein, which inhibits the mitochondrial apoptotic pathway. May regulate TNF-alpha signaling through its interactions with TNFRSF1A; however these effects may be indirect. The sequence is that of BRISC and BRCA1-A complex member 2 from Homo sapiens (Human).